Consider the following 64-residue polypeptide: Large ribosomal subunit protein bL35 (64 aa).

Belongs to the bacterial ribosomal protein bL35 family.

This is Large ribosomal subunit protein bL35 from Coxiella burnetii (strain RSA 331 / Henzerling II).